The chain runs to 233 residues: MGKHIVAQRRGHGSLVYRSPSHRHLGDIKYPRDGTYKIEDIIQAPGRNTPVLLIRNEKNEKNYMIAFNGAYVNQEIHVGDIDSPAIGDVTYLANIPDGSYVYNIESIPGDGGKFCRAAGTAALVISHGAYVSLKLPSGVNKEFHPRCRATVGFIAGSGARDIPILKAGTHIKYLQSKAKRPYTVRGVAMNAVNHPHGGGNHQHVGRPSTVGRGTPPGRKVGRLSPKRRKKYGR.

The disordered stretch occupies residues 194–233 (HPHGGGNHQHVGRPSTVGRGTPPGRKVGRLSPKRRKKYGR). A compositionally biased stretch (basic residues) spans 219–233 (KVGRLSPKRRKKYGR).

The protein belongs to the universal ribosomal protein uL2 family. As to quaternary structure, part of the 50S ribosomal subunit. Forms a bridge to the 30S subunit in the 70S ribosome.

Functionally, one of the primary rRNA binding proteins. Required for association of the 30S and 50S subunits to form the 70S ribosome, for tRNA binding and peptide bond formation. It has been suggested to have peptidyltransferase activity; this is somewhat controversial. Makes several contacts with the 16S rRNA in the 70S ribosome. The protein is Large ribosomal subunit protein uL2 of Picrophilus torridus (strain ATCC 700027 / DSM 9790 / JCM 10055 / NBRC 100828 / KAW 2/3).